The sequence spans 135 residues: Large ribosomal subunit protein uL16c (135 aa).

Residues Met-1 to Lys-20 form a disordered region.

The protein belongs to the universal ribosomal protein uL16 family. As to quaternary structure, part of the 50S ribosomal subunit.

It localises to the plastid. The protein resides in the chloroplast. The protein is Large ribosomal subunit protein uL16c of Landoltia punctata (Dotted duckmeat).